We begin with the raw amino-acid sequence, 194 residues long: Peptidyl-tRNA hydrolase (194 aa).

Position 17 (Y17) interacts with tRNA. Catalysis depends on H22, which acts as the Proton acceptor. TRNA-binding residues include F68, N70, and N116.

It belongs to the PTH family. As to quaternary structure, monomer.

The protein resides in the cytoplasm. It catalyses the reaction an N-acyl-L-alpha-aminoacyl-tRNA + H2O = an N-acyl-L-amino acid + a tRNA + H(+). Functionally, hydrolyzes ribosome-free peptidyl-tRNAs (with 1 or more amino acids incorporated), which drop off the ribosome during protein synthesis, or as a result of ribosome stalling. In terms of biological role, catalyzes the release of premature peptidyl moieties from peptidyl-tRNA molecules trapped in stalled 50S ribosomal subunits, and thus maintains levels of free tRNAs and 50S ribosomes. The chain is Peptidyl-tRNA hydrolase from Actinobacillus pleuropneumoniae serotype 7 (strain AP76).